Consider the following 249-residue polypeptide: MLKQRFVLDTTALTDLQTREVMGYASLCEGMKAILDLIADARLHFGISCYVPYPSVYKEMYEFASRNGCDREVVAKIDTWLVKKSPDRYRVSVTSQIFHEYVAYMRERINRGMGVAEDAIWEAATECLFMENPQNKKKEYKEEVEREVIGGIIGKFRNKYRAALRYGILDSAPDIDVLILAKELDAAVIASDYGIEKWAEQLGVRFVPANVFPMMIQEYLKHLPENENEPEYENRDKSKEGSSGEIEFI.

A disordered region spans residues asparagine 226 to isoleucine 249. A compositionally biased stretch (basic and acidic residues) spans tyrosine 232 to serine 242.

Belongs to the HARP family.

The enzyme catalyses Endonucleolytic cleavage of RNA, removing 5'-extranucleotides from tRNA precursor.. Functionally, RNA-free RNase P that catalyzes the removal of the 5'-leader sequence from pre-tRNA to produce the mature 5'-terminus. The sequence is that of RNA-free ribonuclease P from Methanosarcina barkeri (strain Fusaro / DSM 804).